The primary structure comprises 172 residues: Acetolactate synthase small subunit (172 aa).

Positions 4–78 constitute an ACT domain; sequence TLSVLVEDEA…NVIKVQDITE (75 aa).

Belongs to the acetolactate synthase small subunit family. In terms of assembly, dimer of large and small chains.

It carries out the reaction 2 pyruvate + H(+) = (2S)-2-acetolactate + CO2. It functions in the pathway amino-acid biosynthesis; L-isoleucine biosynthesis; L-isoleucine from 2-oxobutanoate: step 1/4. Its pathway is amino-acid biosynthesis; L-valine biosynthesis; L-valine from pyruvate: step 1/4. In Synechocystis sp. (strain ATCC 27184 / PCC 6803 / Kazusa), this protein is Acetolactate synthase small subunit (ilvH).